A 178-amino-acid polypeptide reads, in one-letter code: Fluoride-specific ion channel FluC 2 (178 aa).

The next 4 membrane-spanning stretches (helical) occupy residues 25–45 (PDIH…GTAI), 63–83 (FVAN…LAGA), 97–117 (GLGM…LEGF), and 129–149 (IAYL…GVWA). Na(+) is bound by residues glycine 104 and serine 107.

It belongs to the fluoride channel Fluc/FEX (TC 1.A.43) family.

The protein resides in the cell membrane. It catalyses the reaction fluoride(in) = fluoride(out). With respect to regulation, na(+) is not transported, but it plays an essential structural role and its presence is essential for fluoride channel function. In terms of biological role, fluoride-specific ion channel. Important for reducing fluoride concentration in the cell, thus reducing its toxicity. This chain is Fluoride-specific ion channel FluC 2, found in Bifidobacterium longum (strain NCC 2705).